A 387-amino-acid polypeptide reads, in one-letter code: 3-ketoacyl-CoA thiolase (387 aa).

Catalysis depends on Cys-91, which acts as the Acyl-thioester intermediate. Residues His-343 and Cys-373 each act as proton acceptor in the active site.

This sequence belongs to the thiolase-like superfamily. Thiolase family. In terms of assembly, heterotetramer of two alpha chains (FadB) and two beta chains (FadA).

The protein resides in the cytoplasm. It carries out the reaction an acyl-CoA + acetyl-CoA = a 3-oxoacyl-CoA + CoA. It functions in the pathway lipid metabolism; fatty acid beta-oxidation. Its function is as follows. Catalyzes the final step of fatty acid oxidation in which acetyl-CoA is released and the CoA ester of a fatty acid two carbons shorter is formed. The sequence is that of 3-ketoacyl-CoA thiolase from Pectobacterium carotovorum subsp. carotovorum (strain PC1).